A 254-amino-acid polypeptide reads, in one-letter code: Ribonuclease HII (254 aa).

The RNase H type-2 domain maps to 46-234 (KLIAGIDEVG…VWMASAPQEV (189 aa)). A divalent metal cation contacts are provided by Asp-52, Glu-53, and Asp-144.

This sequence belongs to the RNase HII family. It depends on Mn(2+) as a cofactor. Mg(2+) serves as cofactor.

It is found in the cytoplasm. The catalysed reaction is Endonucleolytic cleavage to 5'-phosphomonoester.. Its function is as follows. Endonuclease that specifically degrades the RNA of RNA-DNA hybrids. The polypeptide is Ribonuclease HII (Koribacter versatilis (strain Ellin345)).